The primary structure comprises 92 residues: PqqA binding protein (92 aa).

The protein belongs to the PqqD family. In terms of assembly, monomer. Interacts with PqqE.

The protein operates within cofactor biosynthesis; pyrroloquinoline quinone biosynthesis. Its function is as follows. Functions as a PqqA binding protein and presents PqqA to PqqE, in the pyrroloquinoline quinone (PQQ) biosynthetic pathway. This Xanthomonas campestris pv. campestris (strain 8004) protein is PqqA binding protein.